The sequence spans 801 residues: MEFSHKAIEKKWKKYWEENNTNKTTNTSDKKSYVLDMFPYPSGAGIHVGHVKGYTATDVFSRYKRMNGYDVLHPMGWDAFGLPAEQYALKTGNDPIDFTLENIKTFKRQLKMMGFSYDFDKEISTANPNYYKITQWIFNQLYKKGLAENRDVEVNWCQELGTVLANDEIIEKDGLMVSERGEHPVTKRKMRQWVLKITEYADRLLEGLDELEWNSSIKDLQRNWIGKSTGVELDFLVNNIKVPVFTTRIDTIYGVSYIVLAPEHEQVLNITTPEQLKEVQTYIELAKNKSEIDRKDESKPKTGVFTGSYATNPHTNELVQVWVSDYVLANYGTGAVMAVPAHDKRDWEFATKFNLEKKFVIENKTDEKAFVGEGKIINSDILNGMDKKQAIQTMTKIAIEQGWGREQTNYKLRDWLFSRQRFYGEPFPVLYGPNQEITLIEDLPVELPRIKNIKPSGTGESPLANVEEWVNVEIDGVKYRRETNTMPQSAGSSWYYLAYILADGENEFIDIDSAEAKKRFEKWMPVDLYVGGQEHAVGHLLYARFWNYVLYDLGITSVKEPFKQLFNQGMILGPDGRKMSKSWGNVINPDDIVSTHGADSLRLYEMFMGPLDASLPWSEDGLDSALKWIHRAYRMVMTTELTDVNDTKLDFVYNDVVKNVSEMIESLKFNTAISQLMIFVNAVYKHEGPVYRPYIEGFVKMLSIYAPFIGEELWEKLGHAPSITKQAWPVFDPSKLVSNTVVIALQINGKLRATIEVEKGTIKDKLLELAKKQESIISYIKDKEIIKEIAVVDRIVNIVIK.

Positions 39–50 (PYPSGAGIHVGH) match the 'HIGH' region motif. The short motif at 578 to 582 (KMSKS) is the 'KMSKS' region element. K581 lines the ATP pocket.

Belongs to the class-I aminoacyl-tRNA synthetase family.

It localises to the cytoplasm. The enzyme catalyses tRNA(Leu) + L-leucine + ATP = L-leucyl-tRNA(Leu) + AMP + diphosphate. In Mesoplasma florum (strain ATCC 33453 / NBRC 100688 / NCTC 11704 / L1) (Acholeplasma florum), this protein is Leucine--tRNA ligase.